The chain runs to 34 residues: U2-theraphotoxin-Bs1a (34 aa).

3 disulfide bridges follow: Cys-2-Cys-16, Cys-9-Cys-21, and Cys-15-Cys-28.

In terms of tissue distribution, expressed by the venom gland.

The protein resides in the secreted. The polypeptide is U2-theraphotoxin-Bs1a (Brachypelma smithi (Mexican red knee tarantula)).